A 366-amino-acid chain; its full sequence is tRNA/tmRNA (uracil-C(5))-methyltransferase (366 aa).

5 residues coordinate S-adenosyl-L-methionine: Q190, Y218, N223, E239, and D299. Catalysis depends on C324, which acts as the Nucleophile. The Proton acceptor role is filled by E358.

It belongs to the class I-like SAM-binding methyltransferase superfamily. RNA M5U methyltransferase family. TrmA subfamily.

The catalysed reaction is uridine(54) in tRNA + S-adenosyl-L-methionine = 5-methyluridine(54) in tRNA + S-adenosyl-L-homocysteine + H(+). It carries out the reaction uridine(341) in tmRNA + S-adenosyl-L-methionine = 5-methyluridine(341) in tmRNA + S-adenosyl-L-homocysteine + H(+). Its function is as follows. Dual-specificity methyltransferase that catalyzes the formation of 5-methyluridine at position 54 (m5U54) in all tRNAs, and that of position 341 (m5U341) in tmRNA (transfer-mRNA). The sequence is that of tRNA/tmRNA (uracil-C(5))-methyltransferase from Escherichia coli O157:H7 (strain EC4115 / EHEC).